The following is a 257-amino-acid chain: uncharacterized protein (257 aa).

A helical transmembrane segment spans residues Ile-7–Tyr-27.

Its subcellular location is the membrane. This is an uncharacterized protein from Methanocaldococcus jannaschii (strain ATCC 43067 / DSM 2661 / JAL-1 / JCM 10045 / NBRC 100440) (Methanococcus jannaschii).